Reading from the N-terminus, the 544-residue chain is Putative pentatricopeptide repeat-containing protein At5g59200, chloroplastic (544 aa).

Positions 1 to 21 (MISSLAAITGGPSTFRRDPDS) are disordered. Residues 1-25 (MISSLAAITGGPSTFRRDPDSNTLR) constitute a chloroplast transit peptide. 11 PPR repeats span residues 60-90 (DAFV…VSNP), 91-125 (NVYL…SVLP), 127-156 (NYVI…GFGS), 157-187 (SRSV…MPDR), 188-218 (DHVA…VKIK), 219-253 (DTVC…NVSA), 254-288 (NEFT…RMEL), 289-319 (SNFV…MRDK), 320-354 (DVIS…GFRP), 355-385 (NQVT…MKRV), and 391-421 (QIEH…IPIE). Residues 426–501 (MLGTLLSACK…EPGCSTIEVD (76 aa)) are type E motif. A type E(+) motif region spans residues 502 to 532 (NQIHEFLVGDIAHPHKEAIYQRLQELNRILR).

The protein belongs to the PPR family. PCMP-E subfamily.

It is found in the plastid. The protein localises to the chloroplast. In terms of biological role, involved in RNA editing event in chloroplasts. Required for the editing of a single site in rpl23 transcript. The polypeptide is Putative pentatricopeptide repeat-containing protein At5g59200, chloroplastic (PCMP-E41) (Arabidopsis thaliana (Mouse-ear cress)).